We begin with the raw amino-acid sequence, 333 residues long: Casein kinase II subunit beta-1 (333 aa).

Residues 58–78 (VEPEDDDDEEEEDEEDEEDMS) are compositionally biased toward acidic residues. Disordered stretches follow at residues 58-92 (VEPE…ERRH) and 282-333 (ARRY…ESEL). Basic residues predominate over residues 305-316 (ASRRRGPPRRQK).

This sequence belongs to the casein kinase 2 subunit beta family. As to quaternary structure, tetramer composed of two alpha chains, one beta chain and one beta' chain. In terms of processing, phosphorylated by alpha subunit.

In terms of biological role, regulatory subunit of casein kinase II/CK2. As part of the kinase complex regulates the basal catalytic activity of the alpha subunit a constitutively active serine/threonine-protein kinase that phosphorylates a large number of substrates containing acidic residues C-terminal to the phosphorylated serine or threonine. The chain is Casein kinase II subunit beta-1 (ckb-1) from Neurospora crassa (strain ATCC 24698 / 74-OR23-1A / CBS 708.71 / DSM 1257 / FGSC 987).